A 150-amino-acid polypeptide reads, in one-letter code: UPF0756 membrane protein PMI1560 (150 aa).

4 helical membrane-spanning segments follow: residues 16–36 (GLGIISHNMTVTLAMIFLLVI), 51–71 (YGMTIGILILTIGVMTPIATG), 82–102 (FLNWKSLLAIAIGIIVSWLGA), and 123–143 (VIGVALFRGVPVGPLIAAGIL).

It belongs to the UPF0756 family.

Its subcellular location is the cell membrane. This is UPF0756 membrane protein PMI1560 from Proteus mirabilis (strain HI4320).